The following is a 115-amino-acid chain: MNMLMALMVNITLSILLITVAFWLPQLNMYTEKANPYECGFDPMSSARLPFSMKFFLVAITFLLYDLEIALLLPLPWAIQMYNTNTMMLTAFILVSVLALGLAYEWTQKGLEWTE.

Helical transmembrane passes span 4–24 (LMALMVNITLSILLITVAFWL), 55–75 (FFLVAITFLLYDLEIALLLPL), and 86–106 (TMMLTAFILVSVLALGLAYEW).

This sequence belongs to the complex I subunit 3 family. As to quaternary structure, core subunit of respiratory chain NADH dehydrogenase (Complex I) which is composed of 45 different subunits. Interacts with TMEM186. Interacts with TMEM242.

It localises to the mitochondrion inner membrane. The catalysed reaction is a ubiquinone + NADH + 5 H(+)(in) = a ubiquinol + NAD(+) + 4 H(+)(out). Functionally, core subunit of the mitochondrial membrane respiratory chain NADH dehydrogenase (Complex I) which catalyzes electron transfer from NADH through the respiratory chain, using ubiquinone as an electron acceptor. Essential for the catalytic activity of complex I. The polypeptide is NADH-ubiquinone oxidoreductase chain 3 (Peromyscus gossypinus (Cotton deermouse)).